A 291-amino-acid polypeptide reads, in one-letter code: DNA repair protein RecO (291 aa).

The protein belongs to the RecO family.

Involved in DNA repair and RecF pathway recombination. The polypeptide is DNA repair protein RecO (Cupriavidus pinatubonensis (strain JMP 134 / LMG 1197) (Cupriavidus necator (strain JMP 134))).